The chain runs to 556 residues: 2-isopropylmalate synthase (556 aa).

Positions 33–307 (PIWLSTDLRD…DPQLDFSDID (275 aa)) constitute a Pyruvate carboxyltransferase domain. Residues Asp-42, His-246, His-248, and Asn-282 each contribute to the Mg(2+) site. The tract at residues 439–556 (ASAPYALKGH…ALSQAESRAA (118 aa)) is regulatory domain.

The protein belongs to the alpha-IPM synthase/homocitrate synthase family. LeuA type 2 subfamily. In terms of assembly, homodimer. Requires Mg(2+) as cofactor.

It localises to the cytoplasm. It catalyses the reaction 3-methyl-2-oxobutanoate + acetyl-CoA + H2O = (2S)-2-isopropylmalate + CoA + H(+). Its pathway is amino-acid biosynthesis; L-leucine biosynthesis; L-leucine from 3-methyl-2-oxobutanoate: step 1/4. In terms of biological role, catalyzes the condensation of the acetyl group of acetyl-CoA with 3-methyl-2-oxobutanoate (2-ketoisovalerate) to form 3-carboxy-3-hydroxy-4-methylpentanoate (2-isopropylmalate). This chain is 2-isopropylmalate synthase, found in Ectopseudomonas mendocina (strain ymp) (Pseudomonas mendocina).